We begin with the raw amino-acid sequence, 665 residues long: MNLFHLQAPFQATGDQPQAIAQLVNSIEKGNRFQTLLGATGTGKTFTIAATIEKIGKPTLVLAHNKTLAAQLCNELRQFFPENAVEYFISYYDYYQPEAYIPVSDTYIEKSASINDEIDMLRHSATRSLFERRDVVVVASISCIYGLGMPSEYLKASIGLEVGKEINQRQLLRDLVSVQYSRNDLDLQRGRFRLRGDVLELVPAYEDRVIRVEFFGDEIDAIRYLDPVTGNSLQSLERVNIYPARHFVTPDDQLEAACQGIELELEDRLEELEKQGKLLEAQRLGQRTRYDLELLREVGYCNGVENYSRYLAGREPGQPPECLIDYFPKDWLLVIDESHVTIPQLRGMYNGDQARKKVLIEHGFRLPSAADNRPLKAEEFWEKVNQCVFVSATPGNWEIEQSQGQVIEQIIRPTGVLDPEIFVRPTEGQVDDLLGEIKQRIKRKERVLITTLTKRMAEDLTEYFQERGVKVQYLHSEISSIERIEILQNLREGEFDVLIGVNLLREGLDLPEVSLVAILDADKEGFLRAERSLIQTIGRAARHIQGQAILYADNLTDSMIKAMEETERRRNIQMAHNKRHGITPQPIVTRSSNAILSFLDISRRLNAQQLEKVYDQADELPLEKVPELIGQLEEQMKEAAKKLEFEEAAKYRDRIQHLRDKLLGH.

In terms of domain architecture, Helicase ATP-binding spans 25 to 176; sequence NSIEKGNRFQ…NQRQLLRDLV (152 aa). 38-45 is a binding site for ATP; sequence GATGTGKT. Residues 91–114 carry the Beta-hairpin motif; sequence YYDYYQPEAYIPVSDTYIEKSASI. In terms of domain architecture, Helicase C-terminal spans 429-595; sequence QVDDLLGEIK…PIVTRSSNAI (167 aa). The UVR domain occupies 626 to 661; it reads PELIGQLEEQMKEAAKKLEFEEAAKYRDRIQHLRDK.

It belongs to the UvrB family. As to quaternary structure, forms a heterotetramer with UvrA during the search for lesions. Interacts with UvrC in an incision complex.

The protein resides in the cytoplasm. In terms of biological role, the UvrABC repair system catalyzes the recognition and processing of DNA lesions. A damage recognition complex composed of 2 UvrA and 2 UvrB subunits scans DNA for abnormalities. Upon binding of the UvrA(2)B(2) complex to a putative damaged site, the DNA wraps around one UvrB monomer. DNA wrap is dependent on ATP binding by UvrB and probably causes local melting of the DNA helix, facilitating insertion of UvrB beta-hairpin between the DNA strands. Then UvrB probes one DNA strand for the presence of a lesion. If a lesion is found the UvrA subunits dissociate and the UvrB-DNA preincision complex is formed. This complex is subsequently bound by UvrC and the second UvrB is released. If no lesion is found, the DNA wraps around the other UvrB subunit that will check the other stand for damage. This Gloeothece citriformis (strain PCC 7424) (Cyanothece sp. (strain PCC 7424)) protein is UvrABC system protein B.